Consider the following 24-residue polypeptide: Ascaphin-2 (24 aa).

As to expression, expressed by the skin glands.

The protein resides in the secreted. Antimicrobial peptide that shows higher potency against Gram-negative bacteria than against Gram-positive bacteria. Has a very week hemolytic activity. This is Ascaphin-2 from Ascaphus truei (Coastal tailed frog).